Consider the following 115-residue polypeptide: Protein SPIRAL1-like 2 (115 aa).

The interval 29 to 48 is disordered; the sequence is AKAKPAAAAEKETTPAPVKK.

The protein belongs to the SPIRAL1 family.

Functionally, acts in maintaining the cortical microtubules organization essential for anisotropic cell growth. This Oryza sativa subsp. japonica (Rice) protein is Protein SPIRAL1-like 2.